The following is a 642-amino-acid chain: Threonine--tRNA ligase (642 aa).

The 61-residue stretch at 1 to 61 folds into the TGS domain; it reads MPVIRFYDGS…REDAFIEFVD (61 aa). Residues 243-534 form a catalytic region; it reads DHRKIGKFLQ…LIEECSGNLP (292 aa). Zn(2+) is bound by residues C334, H385, and H511.

This sequence belongs to the class-II aminoacyl-tRNA synthetase family. As to quaternary structure, homodimer. Zn(2+) serves as cofactor.

The protein resides in the cytoplasm. The enzyme catalyses tRNA(Thr) + L-threonine + ATP = L-threonyl-tRNA(Thr) + AMP + diphosphate + H(+). In terms of biological role, catalyzes the attachment of threonine to tRNA(Thr) in a two-step reaction: L-threonine is first activated by ATP to form Thr-AMP and then transferred to the acceptor end of tRNA(Thr). Also edits incorrectly charged L-seryl-tRNA(Thr). In Buchnera aphidicola subsp. Acyrthosiphon pisum (strain Tuc7), this protein is Threonine--tRNA ligase.